We begin with the raw amino-acid sequence, 192 residues long: Nucleosome assembly protein 1-like 5 (192 aa).

The span at 1 to 12 (MADSQNQGSAEP) shows a compositional bias: polar residues. The interval 1 to 76 (MADSQNQGSA…APKPRNDFIE (76 aa)) is disordered. Low complexity-rich tracts occupy residues 15 to 28 (AAAA…AAAA) and 40 to 55 (GDSD…VVGQ). A coiled-coil region spans residues 86 to 112 (VLALKKLQKRCDKIEAKFDKEFQALEK). Positions 136–192 (AWTLEGDEEDDDDDEYEDEEEGEEEDEEEEEPAAEAAGTAAAKDEGPHSAVPDDAKK) are disordered. Residues 140 to 168 (EGDEEDDDDDEYEDEEEGEEEDEEEEEPA) are compositionally biased toward acidic residues. Residues 177–192 (AKDEGPHSAVPDDAKK) are compositionally biased toward basic and acidic residues.

The protein belongs to the nucleosome assembly protein (NAP) family.

The protein localises to the nucleus. The protein is Nucleosome assembly protein 1-like 5 (NAP1L5) of Bos taurus (Bovine).